Here is a 551-residue protein sequence, read N- to C-terminus: Glucose-6-phosphate isomerase 2 (551 aa).

The active-site Proton donor is Glu-359. Residues His-390 and Lys-514 contribute to the active site.

This sequence belongs to the GPI family.

The protein localises to the cytoplasm. The enzyme catalyses alpha-D-glucose 6-phosphate = beta-D-fructose 6-phosphate. Its pathway is carbohydrate biosynthesis; gluconeogenesis. It functions in the pathway carbohydrate degradation; glycolysis; D-glyceraldehyde 3-phosphate and glycerone phosphate from D-glucose: step 2/4. Catalyzes the reversible isomerization of glucose-6-phosphate to fructose-6-phosphate. This Streptomyces coelicolor (strain ATCC BAA-471 / A3(2) / M145) protein is Glucose-6-phosphate isomerase 2.